Here is a 509-residue protein sequence, read N- to C-terminus: Maturase K (509 aa).

This sequence belongs to the intron maturase 2 family. MatK subfamily.

It is found in the plastid. Usually encoded in the trnK tRNA gene intron. Probably assists in splicing its own and other chloroplast group II introns. This is Maturase K from Castilleja linariifolia (Wyoming Indian paintbrush).